The following is a 360-amino-acid chain: Phospho-N-acetylmuramoyl-pentapeptide-transferase (360 aa).

A run of 10 helical transmembrane segments spans residues 26–46, 73–93, 98–118, 136–156, 168–188, 199–219, 235–255, 263–283, 288–308, and 338–358; these read TILG…AVIQ, TMGG…WADL, VWVV…DDAL, LQVL…TDPV, WVFP…VGSS, GLAI…AYAS, GVGE…GFLW, VFMG…VAVA, IVLF…MIQV, and VIVR…AMLK.

It belongs to the glycosyltransferase 4 family. MraY subfamily. Mg(2+) is required as a cofactor.

It is found in the cell inner membrane. The catalysed reaction is UDP-N-acetyl-alpha-D-muramoyl-L-alanyl-gamma-D-glutamyl-meso-2,6-diaminopimeloyl-D-alanyl-D-alanine + di-trans,octa-cis-undecaprenyl phosphate = di-trans,octa-cis-undecaprenyl diphospho-N-acetyl-alpha-D-muramoyl-L-alanyl-D-glutamyl-meso-2,6-diaminopimeloyl-D-alanyl-D-alanine + UMP. Its pathway is cell wall biogenesis; peptidoglycan biosynthesis. Its function is as follows. Catalyzes the initial step of the lipid cycle reactions in the biosynthesis of the cell wall peptidoglycan: transfers peptidoglycan precursor phospho-MurNAc-pentapeptide from UDP-MurNAc-pentapeptide onto the lipid carrier undecaprenyl phosphate, yielding undecaprenyl-pyrophosphoryl-MurNAc-pentapeptide, known as lipid I. In Halorhodospira halophila (strain DSM 244 / SL1) (Ectothiorhodospira halophila (strain DSM 244 / SL1)), this protein is Phospho-N-acetylmuramoyl-pentapeptide-transferase.